The sequence spans 381 residues: Guanine nucleotide-binding protein subunit alpha-12 (381 aa).

Cys11 carries S-palmitoyl cysteine lipidation. The region spanning 56 to 381 is the G-alpha domain; it reads RLVKILLLGA…QENLKDIMLQ (326 aa). The interval 59–72 is G1 motif; it reads KILLLGAGESGKST. Residues 67 to 72 and 202 to 205 each bind GTP; these read ESGKST and LLAR. Ser71 lines the Mg(2+) pocket. The segment at 200–208 is G2 motif; sequence DILLARKAT. Thr208 is a binding site for Mg(2+). Residue Thr208 is modified to Phosphothreonine. The segment at 223–232 is G3 motif; sequence FKMVDVGGQR. Positions 292 to 299 are G4 motif; the sequence is ILFLNKMD. Residues 296 to 299 and Ala353 each bind GTP; that span reads NKMD. The interval 351–356 is G5 motif; sequence TTAIDT.

The protein belongs to the G-alpha family. G(12) subfamily. G proteins are composed of 3 units; alpha, beta and gamma. The alpha chain contains the guanine nucleotide binding site. Interacts with UBXD5. Interacts (in GTP-bound form) with PPP5C (via TPR repeats); activates PPP5C phosphatase activity and translocates PPP5C to the cell membrane. Interacts with RGS22. Interacts (via N-terminus) with NAPA; the interaction promotes CDH5 localization to plasma membrane. Interacts with CTNND1 (via N-terminus); the interaction regulates CDH1-mediated cell-cell adhesion. Interacts with PPP2R1A; the interaction promotes protein phosphatase 2A activation causing dephosphorylation of MAPT. Interacts (in GTP-bound form) with ARHGEF1. Interacts (in GTP-bound form) with ARHGEF11 (via RGS domain). Interacts (in GTP-bound form) with ARHGEF12 (via RGS domain).

It localises to the cell membrane. It is found in the lateral cell membrane. The protein resides in the cytoplasm. In terms of biological role, guanine nucleotide-binding proteins (G proteins) are involved as modulators or transducers in various transmembrane signaling systems. Activates effector molecule RhoA by binding and activating RhoGEFs (ARHGEF12/LARG). GNA12-dependent Rho signaling subsequently regulates transcription factor AP-1 (activating protein-1). GNA12-dependent Rho signaling also regulates protein phosphatese 2A activation causing dephosphorylation of its target proteins. Promotes tumor cell invasion and metastasis by activating RhoA/ROCK signaling pathway and up-regulating pro-inflammatory cytokine production. Inhibits CDH1-mediated cell adhesion in process independent from Rho activation. Together with NAPA promotes CDH5 localization to plasma membrane. May play a role in the control of cell migration through the TOR signaling cascade. This is Guanine nucleotide-binding protein subunit alpha-12 (GNA12) from Homo sapiens (Human).